The following is a 130-amino-acid chain: Glycine cleavage system H protein (130 aa).

The Lipoyl-binding domain maps to 24 to 106 (TVTIGITDHA…YDEGWFFKVK (83 aa)). K65 carries the post-translational modification N6-lipoyllysine.

It belongs to the GcvH family. The glycine cleavage system is composed of four proteins: P, T, L and H. It depends on (R)-lipoate as a cofactor.

Functionally, the glycine cleavage system catalyzes the degradation of glycine. The H protein shuttles the methylamine group of glycine from the P protein to the T protein. The sequence is that of Glycine cleavage system H protein from Teredinibacter turnerae (strain ATCC 39867 / T7901).